The primary structure comprises 271 residues: 3-methyl-2-oxobutanoate hydroxymethyltransferase (271 aa).

Asp51 and Asp90 together coordinate Mg(2+). 3-methyl-2-oxobutanoate is bound by residues Asp51–Ser52, Asp90, and Lys118. Mg(2+) is bound at residue Glu120. Catalysis depends on Glu186, which acts as the Proton acceptor.

The protein belongs to the PanB family. Homodecamer; pentamer of dimers. Mg(2+) serves as cofactor.

Its subcellular location is the cytoplasm. The catalysed reaction is 3-methyl-2-oxobutanoate + (6R)-5,10-methylene-5,6,7,8-tetrahydrofolate + H2O = 2-dehydropantoate + (6S)-5,6,7,8-tetrahydrofolate. It participates in cofactor biosynthesis; (R)-pantothenate biosynthesis; (R)-pantoate from 3-methyl-2-oxobutanoate: step 1/2. Functionally, catalyzes the reversible reaction in which hydroxymethyl group from 5,10-methylenetetrahydrofolate is transferred onto alpha-ketoisovalerate to form ketopantoate. This chain is 3-methyl-2-oxobutanoate hydroxymethyltransferase, found in Xanthomonas campestris pv. campestris (strain B100).